The chain runs to 689 residues: Armadillo-like helical domain-containing protein 3 (689 aa).

The helical transmembrane segment at 520–538 threads the bilayer; it reads IFTLALMIVNLFNMFITYG.

It belongs to the ARMH3 family. In terms of assembly, interacts with PI4KB. Interacts with GBF1.

It is found in the golgi apparatus membrane. The protein localises to the cytoplasm. Involved in GBF1 recruitment, Golgi maintenance and protein secretion. The polypeptide is Armadillo-like helical domain-containing protein 3 (Homo sapiens (Human)).